The sequence spans 60 residues: Cytochrome c oxidase subunit 9, mitochondrial (60 aa).

The Mitochondrial matrix portion of the chain corresponds to 1 to 15 (MSALAPITGTLKKRI). The chain crosses the membrane as a helical span at residues 16–38 (ITDIVIGFSLGGVMASYWWWGFH). The Mitochondrial intermembrane portion of the chain corresponds to 39 to 57 (KNVIDRREAFYADLAEKKK). Positions 58 to 60 (AEN) are cleaved as a propeptide — removed in mature form.

This sequence belongs to the fungal cytochrome c oxidase subunit 7a family. As to quaternary structure, component of the cytochrome c oxidase (complex IV, CIV), a multisubunit enzyme composed of a catalytic core of 3 subunits and several supernumerary subunits. The complex exists as a monomer or a dimer and forms supercomplexes (SCs) in the inner mitochondrial membrane with ubiquinol-cytochrome c oxidoreductase (cytochrome b-c1 complex, complex III, CIII).

Its subcellular location is the mitochondrion inner membrane. It functions in the pathway energy metabolism; oxidative phosphorylation. Functionally, component of the cytochrome c oxidase, the last enzyme in the mitochondrial electron transport chain which drives oxidative phosphorylation. The respiratory chain contains 3 multisubunit complexes succinate dehydrogenase (complex II, CII), ubiquinol-cytochrome c oxidoreductase (cytochrome b-c1 complex, complex III, CIII) and cytochrome c oxidase (complex IV, CIV), that cooperate to transfer electrons derived from NADH and succinate to molecular oxygen, creating an electrochemical gradient over the inner membrane that drives transmembrane transport and the ATP synthase. Cytochrome c oxidase is the component of the respiratory chain that catalyzes the reduction of oxygen to water. Electrons originating from reduced cytochrome c in the intermembrane space (IMS) are transferred via the dinuclear copper A center (CU(A)) of subunit 2 and heme A of subunit 1 to the active site in subunit 1, a binuclear center (BNC) formed by heme A3 and copper B (CU(B)). The BNC reduces molecular oxygen to 2 water molecules using 4 electrons from cytochrome c in the IMS and 4 protons from the mitochondrial matrix. The protein is Cytochrome c oxidase subunit 9, mitochondrial (COX9) of Candida glabrata (strain ATCC 2001 / BCRC 20586 / JCM 3761 / NBRC 0622 / NRRL Y-65 / CBS 138) (Yeast).